Reading from the N-terminus, the 65-residue chain is Large ribosomal subunit protein bL35 (65 aa).

Residues methionine 1–arginine 15 are compositionally biased toward basic residues. The interval methionine 1–asparagine 28 is disordered.

This sequence belongs to the bacterial ribosomal protein bL35 family.

This chain is Large ribosomal subunit protein bL35, found in Cyanothece sp. (strain PCC 7425 / ATCC 29141).